A 159-amino-acid chain; its full sequence is Transcriptional repressor NrdR (159 aa).

The interval 1 to 26 (MRCPFCAHDNSQVKDSRPSEDNTSIR) is disordered. Residues 3-34 (CPFCAHDNSQVKDSRPSEDNTSIRRRRQCEGC) fold into a zinc finger. A compositionally biased stretch (basic and acidic residues) spans 11-24 (SQVKDSRPSEDNTS). An ATP-cone domain is found at 49–139 (VVVVKSGERR…VYRDFTEARD (91 aa)).

The protein belongs to the NrdR family. The cofactor is Zn(2+).

In terms of biological role, negatively regulates transcription of bacterial ribonucleotide reductase nrd genes and operons by binding to NrdR-boxes. The sequence is that of Transcriptional repressor NrdR from Novosphingobium aromaticivorans (strain ATCC 700278 / DSM 12444 / CCUG 56034 / CIP 105152 / NBRC 16084 / F199).